The chain runs to 227 residues: Ribosomal RNA large subunit methyltransferase E (227 aa).

Residues Gly-78, Trp-80, Asp-103, Asp-119, and Asp-143 each contribute to the S-adenosyl-L-methionine site. The active-site Proton acceptor is the Lys-183.

The protein belongs to the class I-like SAM-binding methyltransferase superfamily. RNA methyltransferase RlmE family.

The protein localises to the cytoplasm. The enzyme catalyses uridine(2552) in 23S rRNA + S-adenosyl-L-methionine = 2'-O-methyluridine(2552) in 23S rRNA + S-adenosyl-L-homocysteine + H(+). Its function is as follows. Specifically methylates the uridine in position 2552 of 23S rRNA at the 2'-O position of the ribose in the fully assembled 50S ribosomal subunit. The chain is Ribosomal RNA large subunit methyltransferase E from Rickettsia akari (strain Hartford).